The sequence spans 297 residues: Formamidopyrimidine-DNA glycosylase (297 aa).

The active-site Schiff-base intermediate with DNA is the proline 2. Glutamate 3 functions as the Proton donor in the catalytic mechanism. Catalysis depends on lysine 58, which acts as the Proton donor; for beta-elimination activity. The DNA site is built by histidine 106, arginine 125, and arginine 168. The segment at 259–295 (RVYDREGLACTARGCRGRVRRIVQAGRSTFYCETCQP) adopts an FPG-type zinc-finger fold. The active-site Proton donor; for delta-elimination activity is the arginine 285.

Belongs to the FPG family. In terms of assembly, monomer. Zn(2+) serves as cofactor.

The enzyme catalyses Hydrolysis of DNA containing ring-opened 7-methylguanine residues, releasing 2,6-diamino-4-hydroxy-5-(N-methyl)formamidopyrimidine.. It catalyses the reaction 2'-deoxyribonucleotide-(2'-deoxyribose 5'-phosphate)-2'-deoxyribonucleotide-DNA = a 3'-end 2'-deoxyribonucleotide-(2,3-dehydro-2,3-deoxyribose 5'-phosphate)-DNA + a 5'-end 5'-phospho-2'-deoxyribonucleoside-DNA + H(+). In terms of biological role, involved in base excision repair of DNA damaged by oxidation or by mutagenic agents. Acts as a DNA glycosylase that recognizes and removes damaged bases. Has a preference for oxidized purines, such as 7,8-dihydro-8-oxoguanine (8-oxoG). Has AP (apurinic/apyrimidinic) lyase activity and introduces nicks in the DNA strand. Cleaves the DNA backbone by beta-delta elimination to generate a single-strand break at the site of the removed base with both 3'- and 5'-phosphates. The chain is Formamidopyrimidine-DNA glycosylase from Methylobacterium sp. (strain 4-46).